Consider the following 443-residue polypeptide: FLYWCH-type zinc finger-containing protein peb-1 (443 aa).

Positions 22–49 (KPGSSDISSSSTDTSAISPISVSSMPLS) are disordered. Positions 25–42 (SSDISSSSTDTSAISPIS) are enriched in low complexity. Residues 46-203 (MPLSPDKEKK…RNKDGKPKKP (158 aa)) constitute a DNA-binding region (required for DNA-binding). Residues 69–135 (IVTSFKGYQK…NACTKGSHNH (67 aa)) form an FLYWCH-type zinc finger. The segment at 251–271 (PTIQIPQPIPTPIQHQQQEQS) is disordered.

The protein resides in the nucleus. Its function is as follows. Putative transcription factor. Binds to specific sequence motif 5'-[TC][AGT]TGCC[GA][AT]-3' in regulatory elements of target genes such as myosin myo-2. May modulate gene expression, perhaps acting in opposition to transcription factor pha-4. Involved in morphogenesis, perhaps especially in formation of the pharynx. Plays roles in molting, feeding and morphology. This Caenorhabditis elegans protein is FLYWCH-type zinc finger-containing protein peb-1.